The primary structure comprises 238 residues: 2-C-methyl-D-erythritol 4-phosphate cytidylyltransferase (238 aa).

This sequence belongs to the IspD/TarI cytidylyltransferase family. IspD subfamily.

The enzyme catalyses 2-C-methyl-D-erythritol 4-phosphate + CTP + H(+) = 4-CDP-2-C-methyl-D-erythritol + diphosphate. Its pathway is isoprenoid biosynthesis; isopentenyl diphosphate biosynthesis via DXP pathway; isopentenyl diphosphate from 1-deoxy-D-xylulose 5-phosphate: step 2/6. Functionally, catalyzes the formation of 4-diphosphocytidyl-2-C-methyl-D-erythritol from CTP and 2-C-methyl-D-erythritol 4-phosphate (MEP). The protein is 2-C-methyl-D-erythritol 4-phosphate cytidylyltransferase of Alteromonas mediterranea (strain DSM 17117 / CIP 110805 / LMG 28347 / Deep ecotype).